The sequence spans 210 residues: Large ribosomal subunit protein uL3 (210 aa).

The segment at Arg-125–Gly-154 is disordered.

This sequence belongs to the universal ribosomal protein uL3 family. In terms of assembly, part of the 50S ribosomal subunit. Forms a cluster with proteins L14 and L19.

In terms of biological role, one of the primary rRNA binding proteins, it binds directly near the 3'-end of the 23S rRNA, where it nucleates assembly of the 50S subunit. This is Large ribosomal subunit protein uL3 from Chloroflexus aggregans (strain MD-66 / DSM 9485).